Consider the following 296-residue polypeptide: Homoserine kinase (296 aa).

86-96 (KAGSGLGSSAA) provides a ligand contact to ATP.

It belongs to the GHMP kinase family. Homoserine kinase subfamily.

The protein localises to the cytoplasm. It catalyses the reaction L-homoserine + ATP = O-phospho-L-homoserine + ADP + H(+). It participates in amino-acid biosynthesis; L-threonine biosynthesis; L-threonine from L-aspartate: step 4/5. Catalyzes the ATP-dependent phosphorylation of L-homoserine to L-homoserine phosphate. This chain is Homoserine kinase (thrB), found in Methanocaldococcus jannaschii (strain ATCC 43067 / DSM 2661 / JAL-1 / JCM 10045 / NBRC 100440) (Methanococcus jannaschii).